Consider the following 210-residue polypeptide: Large ribosomal subunit protein uL3 (210 aa).

It belongs to the universal ribosomal protein uL3 family. Part of the 50S ribosomal subunit. Forms a cluster with proteins L14 and L19.

Its function is as follows. One of the primary rRNA binding proteins, it binds directly near the 3'-end of the 23S rRNA, where it nucleates assembly of the 50S subunit. The chain is Large ribosomal subunit protein uL3 from Amoebophilus asiaticus (strain 5a2).